A 337-amino-acid polypeptide reads, in one-letter code: Protein RecA (337 aa).

Residue 66 to 73 (GPESSGKT) coordinates ATP.

This sequence belongs to the RecA family.

Its subcellular location is the cytoplasm. Functionally, can catalyze the hydrolysis of ATP in the presence of single-stranded DNA, the ATP-dependent uptake of single-stranded DNA by duplex DNA, and the ATP-dependent hybridization of homologous single-stranded DNAs. It interacts with LexA causing its activation and leading to its autocatalytic cleavage. The sequence is that of Protein RecA from Mesomycoplasma hyopneumoniae (strain 232) (Mycoplasma hyopneumoniae).